A 183-amino-acid chain; its full sequence is MAFNPNPEKTTSCCSTSKAQDKCTCPKGKCECETCPKSTKTPGSGPCNCGVKEKVSTCGCNGSGAACTCPPGQCACDSCPRKAKSVSTCGCGGSAAACSCPPGKCACDSCPKQAQEKVSSCACNGSGGACTCPPGKCSCSGCPAQAKENPADQPTTCGCQGVGVACTCPPGQCACDGCPAKAK.

The tract at residues 1–35 (MAFNPNPEKTTSCCSTSKAQDKCTCPKGKCECETC) is cys-rich copper-binding 1. The tract at residues 36–45 (PKSTKTPGSG) is spacer B1. Residues 46 to 79 (PCNCGVKEKVSTCGCNGSGAACTCPPGQCACDSC) form a cys-rich copper-binding 2 region. The interval 80–88 (PRKAKSVST) is spacer B2. A cys-rich copper-binding 3 region spans residues 89-110 (CGCGGSAAACSCPPGKCACDSC). A spacer B3 region spans residues 111–120 (PKQAQEKVSS). Residues 121–142 (CACNGSGGACTCPPGKCSCSGC) form a cys-rich copper-binding 4 region. Positions 143–156 (PAQAKENPADQPTT) are spacer B4. The tract at residues 157-183 (CGCQGVGVACTCPPGQCACDGCPAKAK) is cys-rich copper-binding 5.

It belongs to the metallothionein superfamily.

The protein resides in the cytoplasm. It localises to the cell cortex. Its function is as follows. Copper metallothionein that protects the cell against copper toxicity by tightly chelating copper ions. Required for antioxidant-mediated growth rescue in the presence of fluconazole. Acts as a critical factors for lung colonization and virulence. This is Copper metallothionein 2 from Cryptococcus neoformans var. grubii serotype A (strain H99 / ATCC 208821 / CBS 10515 / FGSC 9487) (Filobasidiella neoformans var. grubii).